The primary structure comprises 207 residues: Holliday junction resolvase RecU (207 aa).

The tract at residues 1–30 is disordered; sequence MPIRYPNGQPYSRSPKQGQAKKPLPADTYS. Residues T87, D89, E102, and Q121 each coordinate Mg(2+).

The protein belongs to the RecU family. Mg(2+) is required as a cofactor.

It localises to the cytoplasm. The enzyme catalyses Endonucleolytic cleavage at a junction such as a reciprocal single-stranded crossover between two homologous DNA duplexes (Holliday junction).. In terms of biological role, endonuclease that resolves Holliday junction intermediates in genetic recombination. Cleaves mobile four-strand junctions by introducing symmetrical nicks in paired strands. Promotes annealing of linear ssDNA with homologous dsDNA. Required for DNA repair, homologous recombination and chromosome segregation. The chain is Holliday junction resolvase RecU from Shouchella clausii (strain KSM-K16) (Alkalihalobacillus clausii).